A 407-amino-acid chain; its full sequence is uncharacterized protein (407 aa).

Coiled coils occupy residues 96–130 and 287–345; these read TDSIEYEDEKLNELEKTRKEHTDKVKLMQQQFKNE and MKCY…AKTS. The segment covering 302 to 317 has biased composition (basic and acidic residues); that stretch reads EKRKDNLQKQNEEAAK. Residues 302–394 are disordered; the sequence is EKRKDNLQKQ…NMDPAINESD (93 aa). Positions 318–331 are enriched in basic residues; that stretch reads ITKRKNRQEKRREK. Residues 344-370 show a composition bias toward low complexity; that stretch reads TSVSSIPDTSSTTTSTNSTPTNTKSNS.

This is an uncharacterized protein from Acanthamoeba polyphaga (Amoeba).